The sequence spans 416 residues: Formyl-CoA:oxalate CoA-transferase (416 aa).

Residues 17 to 18, arginine 38, 72 to 75, 96 to 98, histidine 104, and 137 to 140 each bind CoA; these read QS, LNTK, NFH, and KAYE. The active-site Nucleophile is the aspartate 169. Position 248-250 (248-250) interacts with substrate; the sequence is GGQ. 273 to 275 contacts CoA; sequence QEQ.

This sequence belongs to the CoA-transferase III family. Frc subfamily. Homodimer.

The catalysed reaction is formyl-CoA + oxalate = oxalyl-CoA + formate. It functions in the pathway metabolic intermediate degradation; oxalate degradation; CO(2) and formate from oxalate: step 1/2. In terms of biological role, involved in the catabolism of oxalate and in the adapatation to low pH via the induction of the oxalate-dependent acid tolerance response (ATR). Catalyzes the transfer of the CoA moiety from formyl-CoA to oxalate. The polypeptide is Formyl-CoA:oxalate CoA-transferase (Shigella sonnei (strain Ss046)).